A 595-amino-acid polypeptide reads, in one-letter code: Alginate biosynthesis sensor protein KinB (595 aa).

Over 1 to 12 (MSMPLPMKLRTR) the chain is Cytoplasmic. A helical transmembrane segment spans residues 13 to 33 (LFLSISALITVSLFGLLLGLF). Residues 34 to 167 (SVMQLGRAQE…SDAETSARHR (134 aa)) are Periplasmic-facing. A helical transmembrane segment spans residues 168 to 188 (AYLVAGLLGLVGVAILLIGFV). The Cytoplasmic segment spans residues 189–595 (TAHSIARRFG…GARFYMLLPV (407 aa)). Residues 195–247 (RRFGAPIETLARAADRIGEGDFDVTLPMTNVAEVGQLTRRFGLMAEALRQYRK) enclose the HAMP domain. The PAS domain maps to 258 to 323 (RRLQAVLDSI…AVEKALLGEV (66 aa)). Residues 327–369 (AMPDLVVDVAGESRLLAWSLYPVTHPGGHSVGAVLVVRDVTEQ) enclose the PAC domain. The 214-residue stretch at 382–595 (RASHELRTPV…GARFYMLLPV (214 aa)) folds into the Histidine kinase domain. His385 is subject to Phosphohistidine; by autocatalysis.

In terms of processing, autophosphorylated.

It is found in the cell inner membrane. The catalysed reaction is ATP + protein L-histidine = ADP + protein N-phospho-L-histidine.. Member of the two-component regulatory system AlgB/KinB involved in regulation of alginate biosynthesis genes. KinB functions as a membrane-associated protein kinase that phosphorylates AlgB, probably in response to environmental signals. The polypeptide is Alginate biosynthesis sensor protein KinB (kinB) (Pseudomonas aeruginosa).